We begin with the raw amino-acid sequence, 338 residues long: MIKQLYKNITICSLAISTALTVFPATSYAKINSEIKAVSEKNLDGDTKMYTRTATTSDSQKNITQSLQFNFLTEPNYDKETVFIKAKGTIGSGLRILDPNGYWNSTLRWPGSYSVSIQNVDDNNNTNVTDFAPKNQDESREVKYTYGYKTGGDFSINRGGLTGNITKESNYSETISYQQPSYRTLLDQSTSHKGVGWKVEAHLINNMGHDHTRQLTNDSDNRTKSEIFSLTRNGNLWAKDNFTPKDKMPVTVSEGFNPEFLAVMSHDKKDKGKSQFVVHYKRSMDEFKIDWNRHGFWGYWSGENHVDKKEEKLSALYEVDWKTHDVKFVKVLNDNEKK.

The N-terminal stretch at 1–29 is a signal peptide; sequence MIKQLYKNITICSLAISTALTVFPATSYA.

This sequence belongs to the aerolysin family.

This is an uncharacterized protein from Staphylococcus aureus (strain Mu50 / ATCC 700699).